A 156-amino-acid chain; its full sequence is Ecotin (156 aa).

The signal sequence occupies residues 1–19 (MKALLIAAGVAALSSTAMA). An intrachain disulfide couples cysteine 65 to cysteine 102.

The protein belongs to the protease inhibitor I11 (ecotin) family. Homodimer.

The protein resides in the periplasm. In terms of biological role, general inhibitor of family S1 serine proteases. This is Ecotin from Pseudomonas aeruginosa (strain UCBPP-PA14).